Here is an 85-residue protein sequence, read N- to C-terminus: Hepcidin (85 aa).

Residues 1–24 (MKTFSVAVAVAVVLAFICLQESSA) form the signal peptide. Residues 25–64 (VPANEEQELEQQIYFADPEMPVESCKMPYYMRENRQGSPA) constitute a propeptide that is removed on maturation. 4 cysteine pairs are disulfide-bonded: Cys-66-Cys-83, Cys-69-Cys-72, Cys-70-Cys-79, and Cys-73-Cys-82.

In terms of assembly, monomer. Expressed in all tissues tested, with highest levels of expression in kidney and lowest levels in liver. Intra-peritoneal injection of lipopolysaccharide results in increased expression in heart, spleen and stomach, but not in kidney or liver.

Its subcellular location is the secreted. Seems to act as a signaling molecule involved in the maintenance of iron homeostasis. Seems to be required in conjunction with HFE to regulate both intestinal iron absorption and iron storage in macrophages. In terms of biological role, has very strong antibacterial activity against the marine Gram-negative bacteria V.alginolyticus (MIC=24 uM), V.fluvialis, V.harveyis (MIC=12 uM) and V.parahaemolyticus (MIC=6 uM). Has antibacterial activity against the Gram-negative bacteria A.hydrophila (MIC=6 uM), E.coli (MIC=24 uM), and E.coli BL21(DE3)plysS (MIC=6 uM), and the Gram-positive bacteria B.cereus (MIC=24 uM), B.subtilis (MIC=6 uM), C.glutamicum (MIC=3 uM), M.luteus (MIC=3 uM), M.lysodeikticus, S.aureus (MIC=6 uM) and S.epidermis (MIC=12 uM). Possesses antifungal activity against A.niger (MIC=24 uM), F.graminearum (MIC24 uM) and F.solani (MIC=24 uM), but lacks antifungal activity against the yeasts P.pastoris GS115 and C.albicans. This Larimichthys crocea (Large yellow croaker) protein is Hepcidin.